We begin with the raw amino-acid sequence, 1205 residues long: Plasma membrane calcium-transporting ATPase 1 (1205 aa).

Topologically, residues 2 to 104 (GDMANNSVAY…KTFLQLVWEA (103 aa)) are cytoplasmic. The calmodulin-binding subdomain A stretch occupies residues 94 to 111 (PKTFLQLVWEALQDVTLI). Residues 105-125 (LQDVTLIILEIAAVVSLGLSF) form a helical membrane-spanning segment. The Extracellular portion of the chain corresponds to 126 to 153 (YQPPGGNEALCGSVNVGEEEEESEAGWI). The helical transmembrane segment at 154-174 (EGAAILLSVVCVVLVTAFNDW) threads the bilayer. At 175–351 (SKEKQFRGLQ…KEKSVLQGKL (177 aa)) the chain is on the cytoplasmic side. A disordered region spans residues 296–343 (EEEKEKEKKDKKTKAQDGAAMEMQPLKSEDGVDGDEKDKKRSNLPKKE). 2 stretches are compositionally biased toward basic and acidic residues: residues 300–310 (EKEKKDKKTKA) and 322–343 (KSED…PKKE). A helical membrane pass occupies residues 352–371 (TKLAVQIGKAGLLMSAITVI). At 372–403 (ILVLYFVIDTSWVQKRPWLAECTPIYIQYFVK) the chain is on the extracellular side. A helical transmembrane segment spans residues 404–424 (FFIIGVTVLVVAVPEGLPLAV). At 425–840 (TISLAYSVKK…RNVYDSISKF (416 aa)) the chain is on the cytoplasmic side. Aspartate 460 (4-aspartylphosphate intermediate) is an active-site residue. Mg(2+)-binding residues include aspartate 460, threonine 462, and aspartate 782. The chain crosses the membrane as a helical span at residues 841-861 (LQFQLTVNVVAVIVAFTGACI). Over 862-868 (TQDSPLK) the chain is Extracellular. The helical transmembrane segment at 869-889 (AVQMLWVNLIMDTLASLALAT) threads the bilayer. Over 890–912 (EPPTEALLLRKPYGRNKPLISRT) the chain is Cytoplasmic. Residues 913–933 (MMKNILGHAFYQLVVVFTLLF) traverse the membrane as a helical segment. Residues 934-956 (AGEKIFDIDSGRNAPLHAPPSEH) are Extracellular-facing. Residues 957–976 (YTIVFNTFVMMQLFNEINAR) traverse the membrane as a helical segment. Residues 977–990 (KIHGERNVFEGIFN) lie on the Cytoplasmic side of the membrane. Residues 991–1012 (NAIFCTIVLGTFVVQIIIVQFG) form a helical membrane-spanning segment. At 1013-1024 (GKPFSCSKLSIE) the chain is on the extracellular side. The chain crosses the membrane as a helical span at residues 1025-1045 (QWLWSVFLGMGTLLWGQLIST). Residues 1046 to 1205 (IPTSRLKFLK…SPLHSLETSL (160 aa)) are Cytoplasmic-facing. The residue at position 1101 (threonine 1101) is a Phosphothreonine; by PKC. The disordered stretch occupies residues 1145-1205 (PLIDDTDAED…SPLHSLETSL (61 aa)). Residues 1183 to 1205 (TDMNKSATSSSPGSPLHSLETSL) show a composition bias toward polar residues.

This sequence belongs to the cation transport ATPase (P-type) (TC 3.A.3) family. Type IIB subfamily.

It is found in the cell membrane. It carries out the reaction Ca(2+)(in) + ATP + H2O = Ca(2+)(out) + ADP + phosphate + H(+). In terms of biological role, catalyzes the hydrolysis of ATP coupled with the transport of calcium from the cytoplasm to the extracellular space thereby maintaining intracellular calcium homeostasis. This Gallus gallus (Chicken) protein is Plasma membrane calcium-transporting ATPase 1.